The sequence spans 189 residues: Peptidyl-tRNA hydrolase (189 aa).

Tyr15 lines the tRNA pocket. Catalysis depends on His20, which acts as the Proton acceptor. TRNA contacts are provided by Phe66, Asn68, and Asn114.

The protein belongs to the PTH family. Monomer.

The protein resides in the cytoplasm. The enzyme catalyses an N-acyl-L-alpha-aminoacyl-tRNA + H2O = an N-acyl-L-amino acid + a tRNA + H(+). Hydrolyzes ribosome-free peptidyl-tRNAs (with 1 or more amino acids incorporated), which drop off the ribosome during protein synthesis, or as a result of ribosome stalling. Its function is as follows. Catalyzes the release of premature peptidyl moieties from peptidyl-tRNA molecules trapped in stalled 50S ribosomal subunits, and thus maintains levels of free tRNAs and 50S ribosomes. This Streptococcus thermophilus (strain CNRZ 1066) protein is Peptidyl-tRNA hydrolase.